The sequence spans 98 residues: Probable sodium channel toxin Ts27 (98 aa).

Positions 1–22 (MYNMVSLFIVAVLLLTYANVEG) are cleaved as a signal peptide. Cystine bridges form between cysteine 36–cysteine 88, cysteine 40–cysteine 63, cysteine 49–cysteine 68, and cysteine 53–cysteine 70.

This sequence belongs to the long (4 C-C) scorpion toxin superfamily. Sodium channel inhibitor family. As to expression, expressed by the venom gland.

Its subcellular location is the secreted. Probable sodium channel toxin. This chain is Probable sodium channel toxin Ts27, found in Tityus serrulatus (Brazilian scorpion).